The primary structure comprises 115 residues: Protein V2 (115 aa).

This sequence belongs to the geminiviridae protein AV2/V2 family. As to quaternary structure, interacts with host SGS3.

It localises to the host cytoplasm. Its subcellular location is the host perinuclear region. Its function is as follows. Through its interaction with host SGS3, acts as a suppressor of RNA-mediated gene silencing, also known as post-transcriptional gene silencing (PTGS), a mechanism of plant viral defense that limits the accumulation of viral RNAs. The sequence is that of Protein V2 from Cynanchum acutum (Little mallow).